A 1488-amino-acid polypeptide reads, in one-letter code: Chromosome partition protein MukB (1488 aa).

34-41 serves as a coordination point for ATP; the sequence is GGNGAGKS. Coiled-coil stretches lie at residues 326–418, 444–472, and 509–602; these read LEAD…QYNQ, LDTFQAKEQEATEKLLSLEQKMSVAQTAH, and RHLA…QRAP. The interval 666-783 is flexible hinge; the sequence is PGGAEDQRLN…SLPIFGRAAR (118 aa). Coiled coils occupy residues 835-923, 977-1116, and 1209-1265; these read EAEI…AKLE, EMLS…AKAG, and VEAI…LQSV. Residues 1049 to 1074 are disordered; sequence ADSGAEERARQRRDELHAQLSNNRSR. Basic and acidic residues predominate over residues 1051–1065; sequence SGAEERARQRRDELH.

This sequence belongs to the SMC family. MukB subfamily. In terms of assembly, homodimerization via its hinge domain. Binds to DNA via its C-terminal region. Interacts, and probably forms a ternary complex, with MukE and MukF via its C-terminal region. The complex formation is stimulated by calcium or magnesium. Interacts with tubulin-related protein FtsZ.

The protein resides in the cytoplasm. The protein localises to the nucleoid. Plays a central role in chromosome condensation, segregation and cell cycle progression. Functions as a homodimer, which is essential for chromosome partition. Involved in negative DNA supercoiling in vivo, and by this means organize and compact chromosomes. May achieve or facilitate chromosome segregation by condensation DNA from both sides of a centrally located replisome during cell division. The polypeptide is Chromosome partition protein MukB (Salmonella gallinarum (strain 287/91 / NCTC 13346)).